The following is a 266-amino-acid chain: Decarboxylase tropJ (266 aa).

The Proton acceptor role is filled by glutamate 80. Residues glutamate 80, histidine 99, histidine 101, and histidine 180 each contribute to the Zn(2+) site.

The protein belongs to the aldolase class II family. Zn(2+) serves as cofactor.

The protein operates within secondary metabolite biosynthesis. Functionally, decarboxylase; part of the gene cluster that mediates the biosynthesis of the tropolone class of fungal maleic anhydrides. The pathway begins with the synthesis of 3-methylorcinaldehyde by the non-reducing polyketide synthase (PKS) tropA. 3-methylorcinaldehyde is the substrate for the FAD-dependent monooxygenase tropB to yield a dearomatized hydroxycyclohexadione. The 2-oxoglutarate-dependent dioxygenase tropC then performs the oxidative ring expansion to provide the first tropolone metabolite stipitaldehyde. Trop D converts stipitaldehyde into stipitacetal which is in turn converted to stipitalide by the short-chain dehydrogenase/reductase tropE. The next steps involve tropF, tropG, tropH, tropI and tropJ to form successive tropolone maleic anhydrides including stipitaldehydic, stipitatonic and stipitatic acids. In Talaromyces stipitatus (strain ATCC 10500 / CBS 375.48 / QM 6759 / NRRL 1006) (Penicillium stipitatum), this protein is Decarboxylase tropJ.